Consider the following 404-residue polypeptide: MNNSRMSSVSTQKTTGRSALGTKSALAAIIATTMMVSVASAASLQTTKATEAASTGWATQSGGTTGGAKASSSKIYAVKSISEFKAALNGTDSSPKIIQVTGAIDISGGKAYTSFDDQKARSQISIPSNTTIIGIGNKGKFTNGSLVVKGVSNVILRNLYIETPVDVAPHYEEGDGWNAEWDAVVIDSTDHVWVDHVTISDGSFTDDKYTTKNGEKYVQHDGSLDIKRGSDYVTVSNSRFELHDKTILIGHSDNNGSQDAGKLRVTFHNNLFDRVGERTPRVRFGSVHAYNNVYVGDVNHKAYRYQYSFGIGTSGSLLSESNAFTIDNMKKISGRDKECSVVKAFNGKIFSDKGSIINGASYNLNGCGFGFSAYSAKIPYKYSAQTITTSLAGSISSNAGYGKL.

The N-terminal stretch at methionine 1–alanine 41 is a signal peptide. Ca(2+) is bound by residues aspartate 182 and aspartate 225. Residue arginine 278 is part of the active site.

This sequence belongs to the polysaccharide lyase 1 family. PLBC subfamily. Ca(2+) is required as a cofactor.

Its subcellular location is the secreted. It catalyses the reaction Eliminative cleavage of (1-&gt;4)-alpha-D-galacturonan to give oligosaccharides with 4-deoxy-alpha-D-galact-4-enuronosyl groups at their non-reducing ends.. It participates in glycan metabolism; pectin degradation; 2-dehydro-3-deoxy-D-gluconate from pectin: step 2/5. Its function is as follows. Involved in maceration and soft-rotting of plant tissue. Pectate lyases have been implicated as pathogenicity factors which induce maceration or rotting of plant tissue. PelE is sufficient to induce these effects under laboratory conditions. This Dickeya chrysanthemi (Pectobacterium chrysanthemi) protein is Pectate lyase E (pelE).